The chain runs to 406 residues: S-adenosylmethionine synthase (406 aa).

Residue 141–146 (GQGSMD) participates in ATP binding.

This sequence belongs to the AdoMet synthase 2 family. In terms of assembly, homodimer. Requires Mg(2+) as cofactor.

The enzyme catalyses L-methionine + ATP + H2O = S-adenosyl-L-methionine + phosphate + diphosphate. Its pathway is amino-acid biosynthesis; S-adenosyl-L-methionine biosynthesis; S-adenosyl-L-methionine from L-methionine: step 1/1. Its function is as follows. Catalyzes the formation of S-adenosylmethionine from methionine and ATP. The sequence is that of S-adenosylmethionine synthase (mat) from Methanocaldococcus jannaschii (strain ATCC 43067 / DSM 2661 / JAL-1 / JCM 10045 / NBRC 100440) (Methanococcus jannaschii).